The sequence spans 385 residues: Acetate kinase (385 aa).

Asn9 lines the Mg(2+) pocket. Lys16 contacts ATP. Arg87 serves as a coordination point for substrate. Asp144 functions as the Proton donor/acceptor in the catalytic mechanism. ATP-binding positions include 202 to 206 (HLGSG) and 277 to 279 (DMR). Residue Glu373 participates in Mg(2+) binding.

Belongs to the acetokinase family. As to quaternary structure, homodimer. Mg(2+) serves as cofactor. Requires Mn(2+) as cofactor.

It is found in the cytoplasm. It catalyses the reaction acetate + ATP = acetyl phosphate + ADP. It functions in the pathway metabolic intermediate biosynthesis; acetyl-CoA biosynthesis; acetyl-CoA from acetate: step 1/2. Its function is as follows. Catalyzes the formation of acetyl phosphate from acetate and ATP. Can also catalyze the reverse reaction. The chain is Acetate kinase from Rickettsia prowazekii (strain Madrid E).